The sequence spans 98 residues: NADH-ubiquinone oxidoreductase chain 4L (98 aa).

A run of 3 helical transmembrane segments spans residues 1-21 (MSMMYFNIFMAFTVSLVGLLM), 29-49 (SLLCLEGMMLSLFVMMSVTIL), and 61-81 (IILLVFAACEAALGLSLLVMV).

This sequence belongs to the complex I subunit 4L family. In terms of assembly, core subunit of respiratory chain NADH dehydrogenase (Complex I) which is composed of 45 different subunits.

It is found in the mitochondrion inner membrane. The catalysed reaction is a ubiquinone + NADH + 5 H(+)(in) = a ubiquinol + NAD(+) + 4 H(+)(out). Functionally, core subunit of the mitochondrial membrane respiratory chain NADH dehydrogenase (Complex I) which catalyzes electron transfer from NADH through the respiratory chain, using ubiquinone as an electron acceptor. Part of the enzyme membrane arm which is embedded in the lipid bilayer and involved in proton translocation. This is NADH-ubiquinone oxidoreductase chain 4L (MT-ND4L) from Zalophus californianus (California sealion).